Consider the following 837-residue polypeptide: Neural cell adhesion molecule 2 (837 aa).

Positions 1–19 are cleaved as a signal peptide; that stretch reads MSLLLSFYLLGLLVSSGQA. Residues 20 to 697 are Extracellular-facing; the sequence is LLQVTISLSK…PNIIKDTLFN (678 aa). 5 consecutive Ig-like C2-type domains span residues 21–108, 113–202, 208–297, 302–396, and 401–491; these read LQVT…ATVV, QKLT…RDII, PPAI…AFLQ, PHII…MYLD, and PKFI…YILA. Cystine bridges form between Cys-42-Cys-93 and Cys-136-Cys-186. Residues Asn-177 and Asn-219 are each glycosylated (N-linked (GlcNAc...) asparagine). A disulfide bridge connects residues Cys-232 and Cys-281. N-linked (GlcNAc...) asparagine glycosylation is present at Asn-309. A disulfide bridge links Cys-322 with Cys-380. 5 N-linked (GlcNAc...) asparagine glycosylation sites follow: Asn-406, Asn-419, Asn-445, Asn-474, and Asn-562. A disulfide bridge connects residues Cys-422 and Cys-475. 2 Fibronectin type-III domains span residues 498 to 591 and 593 to 688; these read SPYG…TLPV and EPSP…PPKP. A helical membrane pass occupies residues 698-718; it reads GLGLGAVIGLGVAALLLILVV. Topologically, residues 719–837 are cytoplasmic; sequence TDVSCFFIRQ…IQSKEDDSKA (119 aa). Residues 764 to 785 are compositionally biased toward basic and acidic residues; that stretch reads GSKEPIVEMRTEDERVTNHEDG. Residues 764–818 are disordered; it reads GSKEPIVEMRTEDERVTNHEDGSPVNEPNETTPLTEPEKLPLKEEDGKEALNPET. Position 765 is a phosphoserine (Ser-765). Thr-780 carries the phosphothreonine modification. Ser-786 is modified (phosphoserine). A compositionally biased stretch (low complexity) spans 789–798; that stretch reads NEPNETTPLT. Positions 799–814 are enriched in basic and acidic residues; sequence EPEKLPLKEEDGKEAL.

Expressed most strongly in adult and fetal brain.

It is found in the cell membrane. Functionally, may play important roles in selective fasciculation and zone-to-zone projection of the primary olfactory axons. The sequence is that of Neural cell adhesion molecule 2 (NCAM2) from Homo sapiens (Human).